Here is a 475-residue protein sequence, read N- to C-terminus: B-type cell cycle switch protein ccs52A (475 aa).

Residues 1–29 (MDGTGNRNPPPTSTVGDNSPPPEPSPESL) are disordered. Positions 7 to 28 (RNPPPTSTVGDNSPPPEPSPES) match the PEST motif motif. A phosphoserine mark is found at serine 43 and serine 45. The short motif at 51 to 57 (DRFIPSR) is the C-box element. The short motif at 80-91 (AYTTLLRTALFG) is the CSM motif element. Threonine 99 bears the Phosphothreonine mark. A phosphoserine mark is found at serine 144 and serine 155. WD repeat units follow at residues 166–203 (QDDF…VTKL), 207–246 (GVDD…KIRS), 249–289 (GHRL…SKLS), 290–329 (GHKS…PVLK), 332–374 (EHTA…HLSC), 376–417 (DTGS…KLAT), and 420–459 (GHTY…KSQN). The residue at position 454 (serine 454) is a Phosphoserine.

It belongs to the WD repeat CDC20/Fizzy family. In terms of tissue distribution, mostly expressed in nodules, and, to a lower extent, in root tips, stems, hypocotyls, leaves, flower buds and flowers.

It is found in the nucleus. It functions in the pathway protein modification; protein ubiquitination. Its function is as follows. Component of the anaphase promoting complex/cyclosome (APC/C), a cell cycle-regulated E3 ubiquitin-protein ligase complex that controls progression through mitosis and the G1 phase of the cell cycle. Required to switch form cell proliferation to cell differentiation, endoreduplication and ploidy-dependent cell enlargement, including during nodulation, before nodule differentiation. Involved in root-knot nematode Meloidogyne incognita giant cells formation. The polypeptide is B-type cell cycle switch protein ccs52A (Medicago truncatula (Barrel medic)).